The primary structure comprises 370 residues: MEYDRELHTEEMTLNFGPQHPSTHGVYRAIFTLDGEHIVNVENIIGYLHRGMEKLAESRTYTQFIPYTDRLDYLSGMLNELGYVQTVEKLAGIEVPERAEYIRIIMAELQRIASHQVFLGSMALDLNGHTPWMYFFRDREKVLDLLEMVCGSRMTTNYMRIGGVSYDLPEEFMPSLKSFLNDMDKSFIEYERIITGNEIFQARTKGVGIISGEKALAYGLTGPNLRASGIDLDLRRDAPYGIYDRFNFKVIVGKDGDCYERWIMRIDEMEESIKIIKQALEQIKEGPVLAKVPRLIKPPKGDIYHQIEGAKGVLGYYIVSDGCDKPYRIHIHGPSFVNIGAFPEMATGSTIQDAVAILASLDPILGEIDR.

This sequence belongs to the complex I 49 kDa subunit family. As to quaternary structure, NDH-1 is composed of 14 different subunits. Subunits NuoB, C, D, E, F, and G constitute the peripheral sector of the complex.

It is found in the cell membrane. It catalyses the reaction a quinone + NADH + 5 H(+)(in) = a quinol + NAD(+) + 4 H(+)(out). Its function is as follows. NDH-1 shuttles electrons from NADH, via FMN and iron-sulfur (Fe-S) centers, to quinones in the respiratory chain. The immediate electron acceptor for the enzyme in this species is believed to be a menaquinone. Couples the redox reaction to proton translocation (for every two electrons transferred, four hydrogen ions are translocated across the cytoplasmic membrane), and thus conserves the redox energy in a proton gradient. The sequence is that of NADH-quinone oxidoreductase subunit D from Clostridium beijerinckii (strain ATCC 51743 / NCIMB 8052) (Clostridium acetobutylicum).